We begin with the raw amino-acid sequence, 290 residues long: Translin-associated protein X (290 aa).

The segment at 1 to 34 (MNGKEGPGGFRKRKHDNFPHNQRREGKDASSSSP) is disordered. The segment covering 16–28 (DNFPHNQRREGKD) has biased composition (basic and acidic residues). The segment at 73–208 (LLHRITSAPD…MRMCINSVGN (136 aa)) is interaction with C1D. Residues Glu129 and Glu197 each contribute to the Mg(2+) site. Lys279 participates in a covalent cross-link: Glycyl lysine isopeptide (Lys-Gly) (interchain with G-Cter in SUMO2).

It belongs to the translin family. In terms of assembly, ring-shaped heterooctamer of six TSN and two TSNAX subunits. Interacts with GOLGA3, TSNAXIP1, SUN1 and AKAP9. Interacts with the homodimeric form of C1D following gamma-radiation. Interacts with TSN and C1D in a mutually exclusive manner. Sumoylated with SUMO1. As to expression, detected in cerebellum.

It localises to the cytoplasm. Its subcellular location is the perinuclear region. It is found in the golgi apparatus. The protein resides in the nucleus. Functionally, acts in combination with TSN as an endonuclease involved in the activation of the RNA-induced silencing complex (RISC). Possible role in spermatogenesis. The sequence is that of Translin-associated protein X (Tsnax) from Rattus norvegicus (Rat).